The following is a 278-amino-acid chain: Phosphonates import ATP-binding protein PhnC 2 (278 aa).

Residues 5 to 253 (IRVDSLNKTF…FLNELYGAEG (249 aa)) enclose the ABC transporter domain. 37–44 (GASGSGKS) is a binding site for ATP.

Belongs to the ABC transporter superfamily. Phosphonates importer (TC 3.A.1.9.1) family. The complex is composed of two ATP-binding proteins (PhnC), two transmembrane proteins (PhnE) and a solute-binding protein (PhnD).

It is found in the cell inner membrane. It carries out the reaction phosphonate(out) + ATP + H2O = phosphonate(in) + ADP + phosphate + H(+). Its function is as follows. Part of the ABC transporter complex PhnCDE involved in phosphonates import. Responsible for energy coupling to the transport system. This is Phosphonates import ATP-binding protein PhnC 2 from Pseudomonas aeruginosa (strain ATCC 15692 / DSM 22644 / CIP 104116 / JCM 14847 / LMG 12228 / 1C / PRS 101 / PAO1).